A 61-amino-acid chain; its full sequence is MKGTPSFGKMNKSHTHIRCRRCGRNAYNVSKHYCAACGFGRTKKIRRYSWQNKKVNGVRIR.

Zn(2+) contacts are provided by cysteine 19, cysteine 22, cysteine 34, and cysteine 37. A C4-type zinc finger spans residues 19–37 (CRRCGRNAYNVSKHYCAAC).

This sequence belongs to the eukaryotic ribosomal protein eL37 family. It depends on Zn(2+) as a cofactor.

Functionally, binds to the 23S rRNA. This chain is Large ribosomal subunit protein eL37 (rpl37e), found in Saccharolobus solfataricus (strain ATCC 35092 / DSM 1617 / JCM 11322 / P2) (Sulfolobus solfataricus).